A 218-amino-acid chain; its full sequence is Ras-related protein Rab-4A (218 aa).

Gly23, Thr24, Gly25, Lys26, Ser27, Cys28, Ser42, His44, and Thr45 together coordinate GTP. Ser27 is a Mg(2+) binding site. The Switch 1 signature appears at His44–Glu49. Mg(2+) is bound by residues Thr45 and Asp68. Positions Ala70–Thr79 match the Switch 2 motif. Position 71 (Gly71) interacts with GTP. Gln72 carries the 5-glutamyl serotonin modification. The GTP site is built by Asn126, Lys127, Asp129, Ala157, and Leu158. Ser190 carries the phosphoserine modification. Ser204 is subject to Phosphoserine; by CDK1. S-geranylgeranyl cysteine attachment occurs at residues Cys216 and Cys218. Cys218 is subject to Cysteine methyl ester.

This sequence belongs to the small GTPase superfamily. Rab family. Interacts with SGSM1, SGSM2 and SGSM3. Interacts with RAB11FIP1, RABEP1, ZFYVE20 and RUFY1. Interacts (membrane-bound form) with NDRG1; the interaction involves NDRG1 in vesicular recycling of E-cadherin. Interacts (in GTP-bound form) with GRIPAP1 (via N-terminus). Interacts with RABEP1 and RBSN. Does not interact with HPS4. Does not interact with HPS4. Interacts with RABEP2; this interaction may mediate VEGFR2 cell surface expression. Requires Mg(2+) as cofactor. Post-translationally, serotonylation of Gln-72 by TGM2 during activation and aggregation of platelets leads to constitutive activation of GTPase activity. In terms of processing, phosphorylated by CDK1 kinase during mitosis. In terms of tissue distribution, expressed in the central nervous system, including cortex, cerebellum, midbrain and spinal cord, and in the kidney, lung, liver and spleen.

The protein localises to the membrane. It localises to the cytoplasm. It is found in the early endosome membrane. Its subcellular location is the recycling endosome membrane. It carries out the reaction GTP + H2O = GDP + phosphate + H(+). Its activity is regulated as follows. Regulated by guanine nucleotide exchange factors (GEFs) which promote the exchange of bound GDP for free GTP. Regulated by GTPase activating proteins (GAPs) which increase the GTP hydrolysis activity. Inhibited by GDP dissociation inhibitors (GDIs). Its function is as follows. The small GTPases Rab are key regulators of intracellular membrane trafficking, from the formation of transport vesicles to their fusion with membranes. Rabs cycle between an inactive GDP-bound form and an active GTP-bound form that is able to recruit to membranes different sets of downstream effectors directly responsible for vesicle formation, movement, tethering and fusion. RAB4A is involved in protein transport. Also plays a role in vesicular traffic. Mediates VEGFR2 endosomal trafficking to enhance VEGFR2 signaling. Acts as a regulator of platelet alpha-granule release during activation and aggregation of platelets. This Mus musculus (Mouse) protein is Ras-related protein Rab-4A.